Reading from the N-terminus, the 88-residue chain is Pigment dispersing factor homolog pdf-1 (88 aa).

An N-terminal signal peptide occupies residues 1 to 21 (MNRFIISMIALLAVFCAVSTA).

Its subcellular location is the secreted. Probable ligand of isoforms a and b of the calcitonin receptor-like protein, pdfr-1, a G-protein coupled receptor. May not signal through isoform c of pdfr-1. Involved in locomotion; more specifically mate searching behavior of males, independent of nutritional status. Involved in regulating the male-specific expression of TGFbeta-like daf-7 in the ASJ chemosensory neurons. Plays a role in circadian rhythms of locomotor activity. Involved in mediating arousal from the sleep-like state called lethargus, which occurs during molting between larval and adult stages, in part by regulating touch sensitivity, and working in concert with neuropeptide flp-2. In the presence of food, plays a role in initiating and extending exploratory roaming behavior, in opposition to 5-hydroxytryptamine (serotonin) signaling. This chain is Pigment dispersing factor homolog pdf-1, found in Caenorhabditis elegans.